Here is a 502-residue protein sequence, read N- to C-terminus: Alpha-globin transcription factor CP2 (502 aa).

Positions 61-300 (ENKILPFQYV…SPGFNSSHSS (240 aa)) constitute a Grh/CP2 DB domain. The tract at residues 133-395 (EHQQLEGWRW…VRPRLTIYVC (263 aa)) is DNA-binding. Disordered stretches follow at residues 238-268 (FKPK…YQPS) and 294-325 (FNSS…DNLL). The segment covering 241 to 265 (KGADRKQKTDREKMEKRTPHEKEKY) has biased composition (basic and acidic residues). Ser353 bears the Phosphoserine mark.

It belongs to the grh/CP2 family. CP2 subfamily. In terms of assembly, binds to DNA as a dimer, isoform 3 does not bind to DNA or affect the binding of isoform 1 to DNA. Interacts with UBP1 and PIAS1, and is probably part of a complex containing TFCP2, UBP1 and PIAS1. Component of the SSP (stage selector protein) complex, which appears to be a heteromer of TFCP2 and 2 copies of NFE4. In terms of tissue distribution, ubiquitous. Expressed in brain, ovary, kidney, thymus, spleen, liver, adrenal, heart and lung (at protein level).

It localises to the nucleus. Binds a variety of cellular and viral promoters including fibrinogen, alpha-globin, SV40 and HIV-1 promoters. Activation of the alpha-globin promoter in erythroid cells is via synergistic interaction with UBP1. Functions as part of the SSP (stage selector protein) complex. Facilitates the interaction of the gamma-globin genes with enhancer elements contained in the locus control region in fetal erythroid cells. Interacts by binding to the stage selector element (SSE) in the proximal gamma-globin promoter. The chain is Alpha-globin transcription factor CP2 (TFCP2) from Homo sapiens (Human).